Here is a 549-residue protein sequence, read N- to C-terminus: ATP synthase subunit alpha (549 aa).

ATP is bound at residue 172 to 179 (GDRKTGKT). The disordered stretch occupies residues 513–549 (SSTGESVVPDEHVEAMDEEDLGKESVKVKKPAPQKKK). Basic residues predominate over residues 540 to 549 (VKKPAPQKKK).

This sequence belongs to the ATPase alpha/beta chains family. In terms of assembly, F-type ATPases have 2 components, CF(1) - the catalytic core - and CF(0) - the membrane proton channel. CF(1) has five subunits: alpha(3), beta(3), gamma(1), delta(1), epsilon(1). CF(0) has three main subunits: a(1), b(2) and c(9-12). The alpha and beta chains form an alternating ring which encloses part of the gamma chain. CF(1) is attached to CF(0) by a central stalk formed by the gamma and epsilon chains, while a peripheral stalk is formed by the delta and b chains.

The protein resides in the cell membrane. It catalyses the reaction ATP + H2O + 4 H(+)(in) = ADP + phosphate + 5 H(+)(out). Produces ATP from ADP in the presence of a proton gradient across the membrane. The alpha chain is a regulatory subunit. The chain is ATP synthase subunit alpha from Mycobacterium marinum (strain ATCC BAA-535 / M).